A 606-amino-acid chain; its full sequence is Phosphomethylpyrimidine synthase (606 aa).

The segment covering 1–13 (MTTADARTPASKQ) has biased composition (polar residues). 2 disordered regions span residues 1 to 49 (MTTA…SRPD) and 105 to 147 (AGRP…DGRP). Positions 14-31 (NDGTPDGTTPDAGTPNDG) are enriched in low complexity. Over residues 105–117 (AGRPVRPEDDGLK) the composition is skewed to basic and acidic residues. Residues Asn-213, Met-242, Tyr-271, His-307, 327-329 (SRG), 368-371 (DGLR), and Glu-407 each bind substrate. His-411 contributes to the Zn(2+) binding site. Tyr-434 contributes to the substrate binding site. His-475 is a binding site for Zn(2+). Residues Cys-555, Cys-558, and Cys-563 each coordinate [4Fe-4S] cluster.

It belongs to the ThiC family. It depends on [4Fe-4S] cluster as a cofactor.

The enzyme catalyses 5-amino-1-(5-phospho-beta-D-ribosyl)imidazole + S-adenosyl-L-methionine = 4-amino-2-methyl-5-(phosphooxymethyl)pyrimidine + CO + 5'-deoxyadenosine + formate + L-methionine + 3 H(+). The protein operates within cofactor biosynthesis; thiamine diphosphate biosynthesis. Its function is as follows. Catalyzes the synthesis of the hydroxymethylpyrimidine phosphate (HMP-P) moiety of thiamine from aminoimidazole ribotide (AIR) in a radical S-adenosyl-L-methionine (SAM)-dependent reaction. This Streptomyces griseus subsp. griseus (strain JCM 4626 / CBS 651.72 / NBRC 13350 / KCC S-0626 / ISP 5235) protein is Phosphomethylpyrimidine synthase.